The following is a 177-amino-acid chain: Large ribosomal subunit protein uL6 (177 aa).

This sequence belongs to the universal ribosomal protein uL6 family. In terms of assembly, part of the 50S ribosomal subunit.

This protein binds to the 23S rRNA, and is important in its secondary structure. It is located near the subunit interface in the base of the L7/L12 stalk, and near the tRNA binding site of the peptidyltransferase center. The polypeptide is Large ribosomal subunit protein uL6 (Buchnera aphidicola subsp. Acyrthosiphon kondoi (Acyrthosiphon kondoi symbiotic bacterium)).